Consider the following 547-residue polypeptide: Sensor histidine kinase CitA (547 aa).

At Met1–Arg23 the chain is on the cytoplasmic side. A helical transmembrane segment spans residues Ile24–Thr44. Over Asp45–Ser180 the chain is Periplasmic. Positions 109, 112, 150, and 152 each coordinate citrate. The chain crosses the membrane as a helical span at residues Leu181–Ala201. Residues Arg202–Gly547 lie on the Cytoplasmic side of the membrane. A PAS domain is found at Ile225–Glu264. Residues Ala347 to Arg542 form the Histidine kinase domain. The residue at position 350 (His350) is a Phosphohistidine; by autocatalysis.

Homodimer. In vitro CitB and the CitA kinase domain form a complex, formation of which is enhanced by ATP. In terms of processing, autophosphorylated.

Its subcellular location is the cell inner membrane. It catalyses the reaction ATP + protein L-histidine = ADP + protein N-phospho-L-histidine.. Member of the two-component regulatory system CitA/CitB. Probably activates CitB by phosphorylation. The periplasmic domain binds H-citrate(2-), which is essential for induction of the citrate-fermentation genes. This is Sensor histidine kinase CitA (citA) from Klebsiella pneumoniae.